A 232-amino-acid polypeptide reads, in one-letter code: Protein Mis18-alpha (232 aa).

Phosphoserine occurs at positions 36, 39, and 40. A Mis18 domain is found at 79-177 (PLVFLCSGCR…SVEAIESYVL (99 aa)). Residues Cys84, Cys87, Cys140, and Cys143 each contribute to the Zn(2+) site. Lys161 is covalently cross-linked (Glycyl lysine isopeptide (Lys-Gly) (interchain with G-Cter in SUMO2)). Ser232 is modified (phosphoserine).

The protein belongs to the mis18 family. In terms of assembly, homodimer, and heterodimer with OIP5/MIS18B. Identified in a complex containing MIS18A, OIP5/MIS18B, MIS18BP1, RBBP7 and RBBP4.

It localises to the nucleus. The protein resides in the chromosome. It is found in the centromere. Functionally, required for recruitment of CENPA to centromeres and normal chromosome segregation during mitosis. This is Protein Mis18-alpha (MIS18A) from Pan troglodytes (Chimpanzee).